Consider the following 289-residue polypeptide: Geranylgeranyl diphosphate synthase (289 aa).

Isopentenyl diphosphate contacts are provided by arginine 43 and histidine 73. Aspartate 80 and aspartate 86 together coordinate Mg(2+). A (2E,6E)-farnesyl diphosphate-binding site is contributed by arginine 91. Arginine 92 contacts isopentenyl diphosphate. Positions 170, 171, and 205 each coordinate (2E,6E)-farnesyl diphosphate.

The protein belongs to the FPP/GGPP synthase family. Requires Mg(2+) as cofactor.

It catalyses the reaction isopentenyl diphosphate + (2E,6E)-farnesyl diphosphate = (2E,6E,10E)-geranylgeranyl diphosphate + diphosphate. Its pathway is isoprenoid biosynthesis; geranylgeranyl diphosphate biosynthesis; geranylgeranyl diphosphate from farnesyl diphosphate and isopentenyl diphosphate: step 1/1. Its function is as follows. Catalyzes the condensation of farnesyl diphosphate (FPP) and isopentenyl diphosphate (IPP) to yield geranylgeranyl diphosphate (GGPP) needed for biosynthesis of carotenoids and diterpenes. The sequence is that of Geranylgeranyl diphosphate synthase (crtE) from Rhodobacter capsulatus (strain ATCC BAA-309 / NBRC 16581 / SB1003).